The chain runs to 305 residues: Oxygen-dependent coproporphyrinogen-III oxidase (305 aa).

Position 97 (serine 97) interacts with substrate. A divalent metal cation contacts are provided by histidine 101 and histidine 111. The Proton donor role is filled by histidine 111. 113–115 (NVR) is a binding site for substrate. A divalent metal cation contacts are provided by histidine 150 and histidine 180. Residues 245-280 (YVEFNLVWDRGTHFGLQSGGRTESILLSMPPLASWA) form an important for dimerization region. 263–265 (GGR) serves as a coordination point for substrate.

It belongs to the aerobic coproporphyrinogen-III oxidase family. In terms of assembly, homodimer. It depends on a divalent metal cation as a cofactor.

It localises to the cytoplasm. The catalysed reaction is coproporphyrinogen III + O2 + 2 H(+) = protoporphyrinogen IX + 2 CO2 + 2 H2O. It functions in the pathway porphyrin-containing compound metabolism; protoporphyrin-IX biosynthesis; protoporphyrinogen-IX from coproporphyrinogen-III (O2 route): step 1/1. Functionally, involved in the heme biosynthesis. Catalyzes the aerobic oxidative decarboxylation of propionate groups of rings A and B of coproporphyrinogen-III to yield the vinyl groups in protoporphyrinogen-IX. The sequence is that of Oxygen-dependent coproporphyrinogen-III oxidase from Variovorax paradoxus (strain S110).